A 763-amino-acid chain; its full sequence is Protein CHROMATIN REMODELING 19 (763 aa).

2 disordered regions span residues 1–43 (MKRD…TPSI) and 114–149 (EDEE…RGED). Residues 23 to 34 (VLKRPRTPKKTR) are compositionally biased toward basic residues. The segment covering 114–135 (EDEEASDDDDDEAESSASEDEF) has biased composition (acidic residues). One can recognise a Helicase ATP-binding domain in the interval 226-404 (LLYKKGIEGA…WSLLEFMLPD (179 aa)). 239–246 (DEMGLGKT) is an ATP binding site. Positions 353-356 (DEAH) match the DEAH box motif. Positions 462 to 482 (RKQEDAYKEAIEEYRAASQAR) form a coiled coil. Positions 520–527 (IRRIYSDE) match the Nuclear localization signal motif. The 151-residue stretch at 592-742 (TLAELLPSMK…AAVLESGVHV (151 aa)) folds into the Helicase C-terminal domain.

This sequence belongs to the SNF2/RAD54 helicase family. As to quaternary structure, interacts with SUVR2 and itself.

Its subcellular location is the nucleus. In terms of biological role, DNA helicase that possesses intrinsic ATP-dependent nucleosome-remodeling activity and is both required for DNA repair and heterochromatin organization. Promotes DNA end resection of double-strand breaks (DSBs) following DNA damage: probably acts by weakening histone DNA interactions in nucleosomes flanking DSBs. Probable chromatin remodeling factor. Probable helicase-like transcription factor involved in transcriptional gene silencing. Associates with SUVR2 and contributes to transcriptional gene silencing at RNA-directed DNA methylation (RdDM) target loci but also at RdDM-independent target loci. May be involved in nucleosome positioning to form ordered nucleosome arrays on chromatin. This chain is Protein CHROMATIN REMODELING 19, found in Arabidopsis thaliana (Mouse-ear cress).